A 95-amino-acid chain; its full sequence is MTITKEKIATMLSSKLGFSNNLCEEIVNTVFFNILEIAKEQKLTLKNFGSFEVKQKNPRPGINFHTKSPIIIESKKNLRFIPSTKLKALINEHDK.

It belongs to the bacterial histone-like protein family.

The sequence is that of Histone-like DNA-binding protein from Rickettsia felis (strain ATCC VR-1525 / URRWXCal2) (Rickettsia azadi).